Here is a 353-residue protein sequence, read N- to C-terminus: Diacetylchitobiose uptake system permease protein NgcF (353 aa).

The interval 1–24 is disordered; sequence MKDTIPTAETASRRPEPAARGGRP. 6 helical membrane-spanning segments follow: residues 36–56, 100–120, 141–161, 197–217, 254–274, and 303–323; these read FFLA…LIPF, LLAA…AVAI, IISF…WAQM, VMFV…IAAI, AYIY…AMVP, and TAMG…VFLV. Positions 95 to 320 constitute an ABC transmembrane type-1 domain; it reads LRNVALLAAF…AVTLVFAALV (226 aa). The interval 329-353 is disordered; the sequence is GGEGESKRKAPGSRARRAAAKGGAR. Over residues 337-353 the composition is skewed to basic residues; sequence KAPGSRARRAAAKGGAR.

It belongs to the binding-protein-dependent transport system permease family. In terms of assembly, the complex is composed of two ATP-binding proteins (MsiK), two transmembrane proteins (NgcF and NgcG) and a solute-binding protein (NgcE).

Its subcellular location is the cell membrane. Functionally, part of the ABC transporter complex NgcEFG-MsiK involved in N,N'-diacetylchitobiose ((GlcNAc)2) uptake. Responsible for the translocation of the substrate across the membrane. The sequence is that of Diacetylchitobiose uptake system permease protein NgcF from Streptomyces coelicolor (strain ATCC BAA-471 / A3(2) / M145).